The chain runs to 277 residues: Undecaprenyl-diphosphatase (277 aa).

The next 8 membrane-spanning stretches (helical) occupy residues 1–21 (MDII…FLPV), 38–58 (SSLA…LWFF), 93–113 (LVWY…LFES), 118–138 (LFAG…TILY), 168–188 (AILP…VIGL), 191–211 (EFAA…AFVV), 222–242 (FNAL…YLAI), and 256–276 (IFAY…ITHL).

Belongs to the UppP family.

It is found in the cell membrane. The enzyme catalyses di-trans,octa-cis-undecaprenyl diphosphate + H2O = di-trans,octa-cis-undecaprenyl phosphate + phosphate + H(+). Its function is as follows. Catalyzes the dephosphorylation of undecaprenyl diphosphate (UPP). This is Undecaprenyl-diphosphatase from Methanobrevibacter smithii (strain ATCC 35061 / DSM 861 / OCM 144 / PS).